The chain runs to 404 residues: Omega-3 fatty acid desaturase, chloroplastic (404 aa).

Residues 28-50 (TVDSSSSPPIEEEPKTQRFDPGA) are disordered. The Histidine box-1 motif lies at 121–125 (HDCGH). A Histidine box-2 motif is present at residues 157–161 (HRTHH). Residues 324–328 (HVIHH) carry the Histidine box-3 motif.

This sequence belongs to the fatty acid desaturase type 1 family.

The protein resides in the plastid. It is found in the chloroplast membrane. Its pathway is lipid metabolism; polyunsaturated fatty acid biosynthesis. Chloroplast omega-3 fatty acid desaturase introduces the third double bond in the biosynthesis of 16:3 and 18:3 fatty acids, important constituents of plant membranes. It is thought to use ferredoxin as an electron donor and to act on fatty acids esterified to galactolipids, sulfolipids and phosphatidylglycerol. The sequence is that of Omega-3 fatty acid desaturase, chloroplastic (FAD7) from Brassica napus (Rape).